The following is a 41-amino-acid chain: Photosystem II reaction center protein L (41 aa).

The helical transmembrane segment at 20-40 (SLYLGLLLVFVVGLLFSSYFL) threads the bilayer.

It belongs to the PsbL family. In terms of assembly, PSII is composed of 1 copy each of membrane proteins PsbA, PsbB, PsbC, PsbD, PsbE, PsbF, PsbH, PsbI, PsbJ, PsbK, PsbL, PsbM, PsbT, PsbX, PsbY, PsbZ, Psb30/Ycf12, peripheral proteins PsbO, CyanoQ (PsbQ), PsbU, PsbV and a large number of cofactors. It forms dimeric complexes.

It is found in the cellular thylakoid membrane. One of the components of the core complex of photosystem II (PSII). PSII is a light-driven water:plastoquinone oxidoreductase that uses light energy to abstract electrons from H(2)O, generating O(2) and a proton gradient subsequently used for ATP formation. It consists of a core antenna complex that captures photons, and an electron transfer chain that converts photonic excitation into a charge separation. This subunit is found at the monomer-monomer interface and is required for correct PSII assembly and/or dimerization. The protein is Photosystem II reaction center protein L of Synechococcus sp. (strain JA-2-3B'a(2-13)) (Cyanobacteria bacterium Yellowstone B-Prime).